The sequence spans 913 residues: Protein translocase subunit SecA (913 aa).

Residues Gln87, 105–109 (GEGKT), and Asp512 each bind ATP. 4 residues coordinate Zn(2+): Cys897, Cys899, Cys908, and His909.

This sequence belongs to the SecA family. As to quaternary structure, monomer and homodimer. Part of the essential Sec protein translocation apparatus which comprises SecA, SecYEG and auxiliary proteins SecDF-YajC and YidC. Zn(2+) is required as a cofactor.

It is found in the cell inner membrane. It localises to the cytoplasm. It carries out the reaction ATP + H2O + cellular proteinSide 1 = ADP + phosphate + cellular proteinSide 2.. Its function is as follows. Part of the Sec protein translocase complex. Interacts with the SecYEG preprotein conducting channel. Has a central role in coupling the hydrolysis of ATP to the transfer of proteins into and across the cell membrane, serving both as a receptor for the preprotein-SecB complex and as an ATP-driven molecular motor driving the stepwise translocation of polypeptide chains across the membrane. This chain is Protein translocase subunit SecA, found in Pseudomonas savastanoi pv. phaseolicola (strain 1448A / Race 6) (Pseudomonas syringae pv. phaseolicola (strain 1448A / Race 6)).